We begin with the raw amino-acid sequence, 141 residues long: Large ribosomal subunit protein uL11 (141 aa).

The protein belongs to the universal ribosomal protein uL11 family. In terms of assembly, part of the ribosomal stalk of the 50S ribosomal subunit. Interacts with L10 and the large rRNA to form the base of the stalk. L10 forms an elongated spine to which L12 dimers bind in a sequential fashion forming a multimeric L10(L12)X complex. One or more lysine residues are methylated.

Its function is as follows. Forms part of the ribosomal stalk which helps the ribosome interact with GTP-bound translation factors. The chain is Large ribosomal subunit protein uL11 from Sulfurimonas denitrificans (strain ATCC 33889 / DSM 1251) (Thiomicrospira denitrificans (strain ATCC 33889 / DSM 1251)).